The sequence spans 426 residues: C4-dicarboxylate transport protein (426 aa).

Helical transmembrane passes span 4-24 (SIFTSLYLQVLVAITIGILLG), 44-64 (LIKMIIAPVIFCTVVTGIAGM), 76-96 (IALLYFEVVSTIALIIGLVVV), 142-162 (IGAFASGNILQVLLFAVMFGF), 184-204 (VIFGVINMIMKLAPIGAFGAM), 222-242 (LILCFYITCALFVVLVLGSIA), 326-346 (IWHQVTLLVVLLLSSKGAAGV), and 352-372 (IVLAATLSAVGHLPVAGLALI).

It belongs to the dicarboxylate/amino acid:cation symporter (DAACS) (TC 2.A.23) family.

The protein resides in the cell inner membrane. Responsible for the transport of dicarboxylates such as succinate, fumarate, and malate from the periplasm across the membrane. The polypeptide is C4-dicarboxylate transport protein (Edwardsiella ictaluri (strain 93-146)).